Here is a 279-residue protein sequence, read N- to C-terminus: HTH-type transcriptional regulator HdfR (279 aa).

The HTH lysR-type domain occupies 1–58; the sequence is MDTELLKTFLEVSRTRHFGRAAESLYLTQSAVSFRIRQLENQLGVNLFTRHRNNIRLT. The H-T-H motif DNA-binding region spans 18–37; it reads FGRAAESLYLTQSAVSFRIR.

The protein belongs to the LysR transcriptional regulatory family.

In terms of biological role, negatively regulates the transcription of the flagellar master operon flhDC by binding to the upstream region of the operon. The protein is HTH-type transcriptional regulator HdfR of Escherichia coli (strain ATCC 8739 / DSM 1576 / NBRC 3972 / NCIMB 8545 / WDCM 00012 / Crooks).